The chain runs to 253 residues: MPAIALDPIHQFEVTKWLDLRLGNIDISFTNASGFMLLGVVLVIGFFSMATRKGELVPSRLQSVAEMGYGFIADMVRSAAGEEGLKFFPFVFTLFFFILFANLIGMVPYAFTTTSHIIVTGALAMTVILMVIVVGLIKNGLGFFKLFAPSGAPLPIYIILTPIEIISFLARPLTLGLRLFANMLAGHIMLKLFAGFTVMLIGAGAIYIPVAALAFAMGVALNALEFLVAGLQAYVFAILTCVYLNDALHADAH.

6 helical membrane passes run 27–47, 87–107, 117–137, 146–166, 196–216, and 224–244; these read ISFT…IGFF, FFPF…IGMV, IIVT…VGLI, LFAP…IEII, FTVM…LAFA, and LEFL…CVYL.

It belongs to the ATPase A chain family. F-type ATPases have 2 components, CF(1) - the catalytic core - and CF(0) - the membrane proton channel. CF(1) has five subunits: alpha(3), beta(3), gamma(1), delta(1), epsilon(1). CF(0) has three main subunits: a(1), b(2) and c(9-12). The alpha and beta chains form an alternating ring which encloses part of the gamma chain. CF(1) is attached to CF(0) by a central stalk formed by the gamma and epsilon chains, while a peripheral stalk is formed by the delta and b chains.

Its subcellular location is the cell inner membrane. Its function is as follows. Key component of the proton channel; it plays a direct role in the translocation of protons across the membrane. The sequence is that of ATP synthase subunit a from Hyphomonas neptunium (strain ATCC 15444).